We begin with the raw amino-acid sequence, 308 residues long: Ribosomal RNA large subunit methyltransferase F (308 aa).

This sequence belongs to the methyltransferase superfamily. METTL16/RlmF family.

The protein localises to the cytoplasm. The enzyme catalyses adenosine(1618) in 23S rRNA + S-adenosyl-L-methionine = N(6)-methyladenosine(1618) in 23S rRNA + S-adenosyl-L-homocysteine + H(+). Specifically methylates the adenine in position 1618 of 23S rRNA. This Salmonella agona (strain SL483) protein is Ribosomal RNA large subunit methyltransferase F.